Reading from the N-terminus, the 343-residue chain is Tribbles homolog 2 (343 aa).

A disordered region spans residues 25 to 50; sequence EELSSIRSAEPSQSFSPNLGSPSPPE. The span at 29-45 shows a compositional bias: polar residues; sequence SIRSAEPSQSFSPNLGS. In terms of domain architecture, Protein kinase spans 61–308; the sequence is IGKYLLLEPL…SQEILDHPWF (248 aa).

This sequence belongs to the protein kinase superfamily. CAMK Ser/Thr protein kinase family. Tribbles subfamily. As to expression, highly expressed in the thyroid, also present in ovary and cerebrum.

It is found in the cytoplasm. The protein resides in the cytoskeleton. Interacts with MAPK kinases and regulates activation of MAP kinases. Does not display kinase activity. This chain is Tribbles homolog 2, found in Canis lupus familiaris (Dog).